The primary structure comprises 943 residues: Isoleucine--tRNA ligase (943 aa).

A 'HIGH' region motif is present at residues 59 to 69 (PYANGRIHLGH). Residue Glu-577 coordinates L-isoleucyl-5'-AMP. Positions 618-622 (KMSKS) match the 'KMSKS' region motif. Lys-621 serves as a coordination point for ATP. 4 residues coordinate Zn(2+): Cys-906, Cys-909, Cys-926, and Cys-929.

Belongs to the class-I aminoacyl-tRNA synthetase family. IleS type 1 subfamily. As to quaternary structure, monomer. Requires Zn(2+) as cofactor.

Its subcellular location is the cytoplasm. It carries out the reaction tRNA(Ile) + L-isoleucine + ATP = L-isoleucyl-tRNA(Ile) + AMP + diphosphate. Catalyzes the attachment of isoleucine to tRNA(Ile). As IleRS can inadvertently accommodate and process structurally similar amino acids such as valine, to avoid such errors it has two additional distinct tRNA(Ile)-dependent editing activities. One activity is designated as 'pretransfer' editing and involves the hydrolysis of activated Val-AMP. The other activity is designated 'posttransfer' editing and involves deacylation of mischarged Val-tRNA(Ile). The sequence is that of Isoleucine--tRNA ligase from Stenotrophomonas maltophilia (strain R551-3).